The primary structure comprises 511 residues: Adenosine deaminase 2 (511 aa).

The signal sequence occupies residues 1-29; that stretch reads MLVDGPSERPALCFLLLAVAMSFFGSALS. Residues 30 to 100 are dimerization; sequence IDETRAHLLL…HLIERSQVFN (71 aa). Zn(2+)-binding residues include H112 and H114. D115 contributes to the substrate binding site. Residue N127 is glycosylated (N-linked (GlcNAc...) asparagine). The segment at 127–185 is PRB domain; that stretch reads NVTYRPHCHICFTPRGIMQFRFAHPTPRPSEKCSKWILLEDYRKRVQNVTEFDDSLLRN. An intrachain disulfide couples C137 to C159. N-linked (GlcNAc...) asparagine glycans are attached at residues N174 and N185. Residues 204-211, H293, and G326 contribute to the substrate site; that span reads WSKFETIF. H356 serves as a coordination point for Zn(2+). The Proton donor role is filled by E359. An N-linked (GlcNAc...) asparagine glycan is attached at N378. Residue H384 is the Proton acceptor of the active site. D441 serves as a coordination point for Zn(2+). D442 provides a ligand contact to substrate.

Belongs to the metallo-dependent hydrolases superfamily. Adenosine and AMP deaminases family. ADGF subfamily. In terms of assembly, homodimer. Interacts with adenosine receptors. Binds heparin. It depends on Zn(2+) as a cofactor. In terms of tissue distribution, detected in blood plasma (at protein level). Widely expressed, with most abundant expression in human adult heart, lung, lymphoblasts, and placenta as well as fetal lung, liver, and kidney. In embryo, expressed in the outflow tract and atrium of the developing heart, the VII/VIII cranial nerve ganglion, and the notochord.

The protein localises to the secreted. It carries out the reaction adenosine + H2O + H(+) = inosine + NH4(+). Adenosine deaminase that may contribute to the degradation of extracellular adenosine, a signaling molecule that controls a variety of cellular responses. Requires elevated adenosine levels for optimal enzyme activity. Binds to cell surfaces via proteoglycans and may play a role in the regulation of cell proliferation and differentiation, independently of its enzyme activity. In Homo sapiens (Human), this protein is Adenosine deaminase 2.